We begin with the raw amino-acid sequence, 79 residues long: D-alanyl carrier protein (79 aa).

The region spanning 1–77 (MSIEETVIEL…KIVQGVEELQ (77 aa)) is the Carrier domain. Ser35 carries the post-translational modification O-(pantetheine 4'-phosphoryl)serine.

Belongs to the DltC family. 4'-phosphopantetheine is transferred from CoA to a specific serine of apo-DCP.

Its subcellular location is the cytoplasm. It participates in cell wall biogenesis; lipoteichoic acid biosynthesis. Functionally, carrier protein involved in the D-alanylation of lipoteichoic acid (LTA). The loading of thioester-linked D-alanine onto DltC is catalyzed by D-alanine--D-alanyl carrier protein ligase DltA. The DltC-carried D-alanyl group is further transferred to cell membrane phosphatidylglycerol (PG) by forming an ester bond, probably catalyzed by DltD. D-alanylation of LTA plays an important role in modulating the properties of the cell wall in Gram-positive bacteria, influencing the net charge of the cell wall. The sequence is that of D-alanyl carrier protein from Streptococcus pyogenes serotype M1.